Consider the following 140-residue polypeptide: Large ribosomal subunit protein uL14 (140 aa).

The protein belongs to the universal ribosomal protein uL14 family. In terms of assembly, component of the large ribosomal subunit.

It is found in the cytoplasm. In terms of biological role, component of the large ribosomal subunit. The ribosome is a large ribonucleoprotein complex responsible for the synthesis of proteins in the cell. In Ictalurus punctatus (Channel catfish), this protein is Large ribosomal subunit protein uL14 (rpl23).